Here is a 232-residue protein sequence, read N- to C-terminus: Glutathione S-transferase U10 (232 aa).

The GST N-terminal domain occupies 6 to 85 (SKVILHGTWI…YIDETWTNSP (80 aa)). Glutathione-binding positions include 16 to 17 (ST), 42 to 43 (NK), 56 to 57 (KI), and 69 to 70 (ES). The region spanning 91 to 226 (DPYERAQVRF…FIQKYRQKCL (136 aa)) is the GST C-terminal domain.

The protein belongs to the GST superfamily. Tau family.

It is found in the cytoplasm. Its subcellular location is the cytosol. The catalysed reaction is RX + glutathione = an S-substituted glutathione + a halide anion + H(+). In terms of biological role, may be involved in the conjugation of reduced glutathione to a wide number of exogenous and endogenous hydrophobic electrophiles and have a detoxification role against certain herbicides. This Arabidopsis thaliana (Mouse-ear cress) protein is Glutathione S-transferase U10 (GSTU10).